A 121-amino-acid polypeptide reads, in one-letter code: Large ribosomal subunit protein uL18 (121 aa).

Belongs to the universal ribosomal protein uL18 family. As to quaternary structure, part of the 50S ribosomal subunit; part of the 5S rRNA/L5/L18/L25 subcomplex. Contacts the 5S and 23S rRNAs.

Functionally, this is one of the proteins that bind and probably mediate the attachment of the 5S RNA into the large ribosomal subunit, where it forms part of the central protuberance. The polypeptide is Large ribosomal subunit protein uL18 (Burkholderia ambifaria (strain MC40-6)).